The sequence spans 610 residues: MSESGQEQNRGTNTSPNNAENNNNSNAASGPLNGGAEQTRNITVSIQYSYFTPERLAHLSNISNNDNNENNSAASGSTIANGTGPSFGIGNGGHQPDGALVLSFRDVPASTPQDRLNSFISVAAQLAMERFNRLLNRPKGISKDEFDKLPVLQVSDLPKAEGPLCSICYDEYEDEVDSTKAKRKRDSENEEESEGTKKRKDNEGAPLRTTADNDSNPSITNATVVEPPSIPLTEQQRTLNDEETNPSYKHSPIKLPCGHIFGRECIYKWSRLENSCPLCRQKISESVGVQRAAQQDTDEVAANEAAFERIRRVLYDPTAVNSTNENSSAPSENTSNTTVPTIGNASSGEQMLSRTGFFLVPQNGQPLHNPVRLPPNDSDRNGVNGPSSTTQNPPSNSGGSNNNQSPRWVPIPLTLFQFHSPNPNPSASDSSASPSAANGPNSNNTSSDATDPHHNRLRAVLDHIFNVAQRGTSDTSATTAPGAQTVHNQGRNDSSSSDTTQGSSFLENISRLTGHFTNGSRDNNNDNNHSNDQQRGGSTGENNRNNLFSSGVASYRNQNGDVTTVELRNNNSAAFPPTDENPSQGQGSSSSDTTIHNDVPNDNNEQRSSQ.

The span at 1–10 shows a compositional bias: polar residues; the sequence is MSESGQEQNR. 2 disordered regions span residues 1–36 and 176–231; these read MSES…NGGA and VDST…PSIP. A compositionally biased stretch (low complexity) spans 11–36; that stretch reads GTNTSPNNAENNNNSNAASGPLNGGA. Over residues 194-203 the composition is skewed to basic and acidic residues; it reads EGTKKRKDNE. Over residues 210–223 the composition is skewed to polar residues; the sequence is TADNDSNPSITNAT. The RING-type zinc finger occupies 240 to 280; the sequence is NDEETNPSYKHSPIKLPCGHIFGRECIYKWSRLENSCPLCR. Disordered stretches follow at residues 318–348, 360–453, 471–502, 514–554, and 569–610; these read TAVN…ASSG, VPQN…TDPH, GTSD…TTQG, GHFT…GVAS, and NNNS…RSSQ. The segment covering 319–348 has biased composition (polar residues); it reads AVNSTNENSSAPSENTSNTTVPTIGNASSG. Composition is skewed to low complexity over residues 384–406 and 425–447; these read NGPS…NQSP and PSAS…NTSS. A compositionally biased stretch (polar residues) spans 471–492; it reads GTSDTSATTAPGAQTVHNQGRN. A compositionally biased stretch (low complexity) spans 493–502; that stretch reads DSSSSDTTQG. Polar residues-rich tracts occupy residues 533–554 and 592–610; these read QQRG…GVAS and DTTI…RSSQ.

In terms of biological role, plays a specific role in mating-type regulation of yeast, by acting post-translationally to control the stability or activity of the SIR4 proteins. This chain is Protein SAN1 (SAN1), found in Saccharomyces cerevisiae (strain ATCC 204508 / S288c) (Baker's yeast).